The sequence spans 464 residues: ATP synthase subunit beta (464 aa).

Residue 150-157 coordinates ATP; sequence GGAGVGKT.

Belongs to the ATPase alpha/beta chains family. F-type ATPases have 2 components, CF(1) - the catalytic core - and CF(0) - the membrane proton channel. CF(1) has five subunits: alpha(3), beta(3), gamma(1), delta(1), epsilon(1). CF(0) has three main subunits: a(1), b(2) and c(9-12). The alpha and beta chains form an alternating ring which encloses part of the gamma chain. CF(1) is attached to CF(0) by a central stalk formed by the gamma and epsilon chains, while a peripheral stalk is formed by the delta and b chains.

The protein resides in the cell membrane. It carries out the reaction ATP + H2O + 4 H(+)(in) = ADP + phosphate + 5 H(+)(out). In terms of biological role, produces ATP from ADP in the presence of a proton gradient across the membrane. The catalytic sites are hosted primarily by the beta subunits. The polypeptide is ATP synthase subunit beta (Dehalococcoides mccartyi (strain ATCC BAA-2100 / JCM 16839 / KCTC 5957 / BAV1)).